A 202-amino-acid polypeptide reads, in one-letter code: Small ribosomal subunit protein uS4 (202 aa).

The tract at residues 16–42 (GELPGLSRKNPRRAYPPGQHGQARKKR) is disordered. An S4 RNA-binding domain is found at 90 to 151 (MRLDNTVFRL…QERSRRLVEA (62 aa)).

It belongs to the universal ribosomal protein uS4 family. Part of the 30S ribosomal subunit. Contacts protein S5. The interaction surface between S4 and S5 is involved in control of translational fidelity.

In terms of biological role, one of the primary rRNA binding proteins, it binds directly to 16S rRNA where it nucleates assembly of the body of the 30S subunit. Functionally, with S5 and S12 plays an important role in translational accuracy. The sequence is that of Small ribosomal subunit protein uS4 from Rippkaea orientalis (strain PCC 8801 / RF-1) (Cyanothece sp. (strain PCC 8801)).